A 454-amino-acid polypeptide reads, in one-letter code: N-acetyl-S-(2-succino)cysteine lyase (454 aa).

A fumarate-binding site is contributed by 106-107 (TT). Catalysis depends on histidine 154, which acts as the Proton donor/acceptor. A fumarate-binding site is contributed by arginine 233. Serine 277 functions as the Proton donor/acceptor in the catalytic mechanism. Fumarate contacts are provided by residues threonine 278 and 283–285 (KRN).

It belongs to the lyase 1 family.

It carries out the reaction N-acetyl-S-(2-succino)-L-cysteine = N-acetyl-L-cysteine + fumarate. It participates in amino-acid biosynthesis; L-cysteine biosynthesis. Functionally, catalyzes the cleavage of N-acetyl-S-(2-succino)cysteine into fumarate and N-acetylcysteine. Is involved in a S-(2-succino)cysteine (2SC) degradation pathway that allows the bacterium to recover cysteine from 2SC and to detoxify 2SC that may be a toxic metabolite. Can also perform the reverse reaction in vitro, and has minor activity against 2SC and other small molecule thiols. This Dickeya dadantii (strain 3937) (Erwinia chrysanthemi (strain 3937)) protein is N-acetyl-S-(2-succino)cysteine lyase.